A 310-amino-acid polypeptide reads, in one-letter code: MPLLVDGQRVRLPRSAVELVRAHPPLEERARLLRGQSVQQVGPQGLLYVQQRELAVTSPKDGSISILGSDDATTCHIVVLRHTGNGATCLTHCDGSDTKAEVPLIMSSIKSFSEHAECGRLEVHLVGGFSDDRQLSQKLTHQLLSEFDKQDDDIHLVTLCVTELNDREENENHFPIIYGIAVNIKTAEIYRASFQDRGPEEQLRAARALAGGPMISIYDAKTEQLRIGPCSWTPFPQVDFWLQQDDKQILESLSTSPLAEPPHFVEHIRSTLMFLKKFPSPENILFPGNKALLYKKNKDGLWEKISSPGS.

As to quaternary structure, monomer.

The protein resides in the cytoplasm. It catalyses the reaction N-terminal L-asparaginyl-[protein] + H2O + H(+) = N-terminal L-aspartyl-[protein] + NH4(+). In terms of biological role, N-terminal asparagine deamidase that mediates deamidation of N-terminal asparagine residues to aspartate. Required for the ubiquitin-dependent turnover of intracellular proteins that initiate with Met-Asn. These proteins are acetylated on the retained initiator methionine and can subsequently be modified by the removal of N-acetyl methionine by acylaminoacid hydrolase (AAH). Conversion of the resulting N-terminal asparagine to aspartate by NTAN1/PNAD renders the protein susceptible to arginylation, polyubiquitination and degradation as specified by the N-end rule. This enzyme does not act on substrates with internal or C-terminal asparagines and does not act on glutamine residues in any position. The chain is Protein N-terminal asparagine amidohydrolase from Mus musculus (Mouse).